The sequence spans 562 residues: Bacillolysin (562 aa).

The signal sequence occupies residues 1 to 24 (MKKKKQALKVLLSVGILSSSFAFA). Positions 25–245 (HTSSAAPNNV…KQAAKPAAKP (221 aa)) are cleaved as a propeptide — activation peptide. Ca(2+)-binding residues include D303, D305, and D384. Residue H388 participates in Zn(2+) binding. E389 is a catalytic residue. H392 and E412 together coordinate Zn(2+). Residues E423, N429, D431, E433, E436, Y439, T440, and D446 each coordinate Ca(2+). Residue H477 is the Proton donor of the active site.

The protein belongs to the peptidase M4 family. The cofactor is Ca(2+). Zn(2+) serves as cofactor.

Its subcellular location is the secreted. The catalysed reaction is Similar, but not identical, to that of thermolysin.. In terms of biological role, extracellular zinc metalloprotease. In Priestia megaterium (strain DSM 319 / IMG 1521) (Bacillus megaterium), this protein is Bacillolysin (nprM).